Consider the following 122-residue polypeptide: Acidic phospholipase A2 BpirPLA2-I (122 aa).

Intrachain disulfides connect C26/C115, C28/C44, C43/C95, C49/C122, C50/C88, C57/C81, and C75/C86. Positions 27, 29, and 31 each coordinate Ca(2+). H47 is a catalytic residue. Ca(2+) is bound at residue D48. The active site involves D89. The Antiplatelet activity motif lies at 105-117 (IKYWFYGAKNCQE).

This sequence belongs to the phospholipase A2 family. Group II subfamily. D49 sub-subfamily. It depends on Ca(2+) as a cofactor. Expressed by the venom gland.

The protein resides in the secreted. It carries out the reaction a 1,2-diacyl-sn-glycero-3-phosphocholine + H2O = a 1-acyl-sn-glycero-3-phosphocholine + a fatty acid + H(+). With respect to regulation, inhibited by EDTA and p-bromophenacyl bromide (BPB). Functionally, snake venom phospholipase A2 (PLA2) that inhibits collagen/ADP-induced platelet aggregation, and induces hypotension in rats (activity abolished in the presence of p-bromophenacyl bromide). PLA2 catalyzes the calcium-dependent hydrolysis of the 2-acyl groups in 3-sn-phosphoglycerides. The polypeptide is Acidic phospholipase A2 BpirPLA2-I (Bothrops pirajai (Piraja's lancehead)).